The following is a 216-amino-acid chain: MIRKTSVLRSNFIGIYAKAWDDVAFITMMADEKTVADFQEVLQVDVRRISIDNSSLIGTMMVMNSNGLIVPYGSEITGLGDLDGRNVLQLKDKINAIGNDIIANDHGAIIHKNFSNRSRKEIEDTLGVETIRTTIGNILTVGSAGILTSKGMLVNPETDDDELEFLRDFFKVSVKSGTANFGSIYVGASIVANSKGVLVGKDTTPIEMDRIDDVLS.

The protein belongs to the eIF-6 family.

Functionally, binds to the 50S ribosomal subunit and prevents its association with the 30S ribosomal subunit to form the 70S initiation complex. The protein is Translation initiation factor 6 of Thermoplasma acidophilum (strain ATCC 25905 / DSM 1728 / JCM 9062 / NBRC 15155 / AMRC-C165).